We begin with the raw amino-acid sequence, 320 residues long: Ribosomal RNA small subunit methyltransferase H (320 aa).

S-adenosyl-L-methionine contacts are provided by residues 36-38 (GGH), Asp56, Phe82, Asp103, and Gln110.

The protein belongs to the methyltransferase superfamily. RsmH family.

The protein localises to the cytoplasm. The catalysed reaction is cytidine(1402) in 16S rRNA + S-adenosyl-L-methionine = N(4)-methylcytidine(1402) in 16S rRNA + S-adenosyl-L-homocysteine + H(+). In terms of biological role, specifically methylates the N4 position of cytidine in position 1402 (C1402) of 16S rRNA. This chain is Ribosomal RNA small subunit methyltransferase H, found in Chromobacterium violaceum (strain ATCC 12472 / DSM 30191 / JCM 1249 / CCUG 213 / NBRC 12614 / NCIMB 9131 / NCTC 9757 / MK).